The sequence spans 106 residues: ATP-dependent Clp protease adapter protein ClpS (106 aa).

This sequence belongs to the ClpS family. Binds to the N-terminal domain of the chaperone ClpA.

In terms of biological role, involved in the modulation of the specificity of the ClpAP-mediated ATP-dependent protein degradation. The polypeptide is ATP-dependent Clp protease adapter protein ClpS (Escherichia coli O127:H6 (strain E2348/69 / EPEC)).